The chain runs to 288 residues: ATP synthase gamma chain (288 aa).

Belongs to the ATPase gamma chain family. As to quaternary structure, F-type ATPases have 2 components, CF(1) - the catalytic core - and CF(0) - the membrane proton channel. CF(1) has five subunits: alpha(3), beta(3), gamma(1), delta(1), epsilon(1). CF(0) has three main subunits: a, b and c.

The protein localises to the cell membrane. Produces ATP from ADP in the presence of a proton gradient across the membrane. The gamma chain is believed to be important in regulating ATPase activity and the flow of protons through the CF(0) complex. The protein is ATP synthase gamma chain of Staphylococcus aureus (strain Mu3 / ATCC 700698).